The following is a 1387-amino-acid chain: MPPGTKGDPSNVTQPLPCLPSAEEDAIKVFVRIRPPVEGTLTGVDGEQGSCLTALSSTTIRLHSKPEPKMFTFDHVANVDTTQESVFSSVAKNIVESCMNGYNGTIFAYGQTGSGKTFTMLGPSESDNFTHNLRGVIPRSFEYLFFLINREKEKAGDGKSFLCKCSFIEIYNEQIFDLLDSASAGLFLREHIKKGVFVVGAVEQVVTSAAEAYQVLSMGWRNRRVASTSMNRESSRSHAVFTVTIESMEKTNDIVNIRSSQLNLVDLAGSERQKDTQTEGVRLKEAGSINRSLSCLGQVITALVDVANGRQRHICYRDSKLTFLLRDSLGGNAKTFIIANVHPGSKCFGETLSTLQFAQRAKLIKNKAVVNEDTQGNVSQLQAEVKKLKEQLSQLLSGQMPGDISVARAPSVGDNMDYMNTFIEAMMLLERSDSEKKALLQKVIQLEDLCNKKEKFIQSNKMIVKFREDHIVRLEKAHREGQISLSNNEQDNFIAELKEEIRTLKEQVEHHPRVAKYALENHSLREENKRIGSLQSVKRAQEVSAQMMAELEKAFLEASVSEKDRQVAPMHSTPIQLDNSSLMSAARMRERMLQLESELATSKQEYEEFKELTKKKQVEQESELQSLMKSNQHLENILDAIKENKRHEVSQLNRMHAETIKNMTTPTKAYNLRSRLVPRLSLDGISNGLTDTPKSGDVMDDIINEPIPPEMSEQAYEAIAEELRIVQEQVTALQVKLDEEESKNIKLEQQVNKLELCSTQIQELFNSERSNWNKEQQAFIAQIKSLEKQQQDNKNQEDVLKSEVHDLRVVLQSADRELSAVKGEYSLFREKQEKELSQLSARHMAVQLQLDNFRLEHETLLEEKRSLQDAFDNLEEVMKFETDQLKQELSDSKHENETLRAELSNLLELLETEKERRQKLTSQLEEDKESKTKELLQVVDENMHLRKQCSELVTKCEHQVTELQRLEHSLTSSKEMIADLEKKNTADKEVVVDLMNQIQVHRTTIIHKTESIDLLTRELEDINSKYSIVLLAKEECKTVNEEQEKQIEELRESLERKQSADNIEKELLCDDLAHATEELGKLTEAFNKQETMLHACEKELVEKEQLISELTNKVKLMTDLEITKTEQEKIKPSHSNSNSPVVLAQTPRTPVGNPYESEFANLQNRNTNLAVLISELNEERTLKNEEIIKLKMQLCETENMHLEIQNLQGICKELKSQLENCKKGMKDGNEQKPSDMQDLKREIEKEVSERMEKGKATEHILKLQAELEETRNLLCAKDHSLNELNNEMERTRSLEAKAFTEKEQIRSVLEAKYEETEKLSQELDMLRKQVSFLAEENGKILGHQNPNQKIQYLVKLKKENDKLLEEAEKLRIENLFLKETKKCEHCD.

A Kinesin motor domain is found at 26–364; it reads AIKVFVRIRP…LQFAQRAKLI (339 aa). 110–117 contributes to the ATP binding site; the sequence is GQTGSGKT. Positions 369–1383 form a coiled coil; sequence VVNEDTQGNV…NLFLKETKKC (1015 aa). Residues 1138 to 1387 are necessary for its targeting to microtubule minus ends; that stretch reads NSPVVLAQTP…KETKKCEHCD (250 aa).

Belongs to the TRAFAC class myosin-kinesin ATPase superfamily. Kinesin family. KLP2 subfamily. In terms of assembly, homodimer. Dimerization is required for targeting to microtubule minus ends. Found in a complex with tpx2 and microtubules. Its association with microtubules and targeting to microtubule minus ends requires tpx2. In terms of tissue distribution, strongly expressed in testis and weakly in lung (at protein level).

The protein localises to the cytoplasm. It localises to the cytoskeleton. It is found in the microtubule organizing center. Its subcellular location is the centrosome. The protein resides in the spindle. The protein localises to the spindle pole. Plus-end directed kinesin-like motor enzyme involved in mitotic spindle assembly. Required for centrosome separation and maintenance of spindle bipolarity during mitosis. In Xenopus laevis (African clawed frog), this protein is Kinesin-like protein KIF15-B (kif15-b).